Here is a 333-residue protein sequence, read N- to C-terminus: MPLGLGRRKKAPPLVENEEAEPSRSGLGVGEPGPLGGSGAGESQMGLPPPPASLRPRLVFHTQLAHGSPTGRIEGFTNVKELYGKIAEAFRLPAAEVMFCTLNTHKVDMDKLLGGQIGLEDFIFAHVKGQRKEVEVFKSEDALGLTITDNGAGYAFIKRIKEGSVIDHIQLISVGDMIEAINGQSLLGCRHYEVARLLKELPRGRTFTLKLTEPRKAFDMISQRSSGGHPGSGPQLGTGRGTLRLRSRGPATVEDLPSAFEEKAIEKVDDLLESYMGIRDTELAATMVELGKDKRNPDELAEALDERLGDFAFPDEFVFDVWGAIGDAKVGRY.

Positions 1–11 (MPLGLGRRKKA) are enriched in basic residues. The tract at residues 1-55 (MPLGLGRRKKAPPLVENEEAEPSRSGLGVGEPGPLGGSGAGESQMGLPPPPASLR) is disordered. Over residues 27–40 (LGVGEPGPLGGSGA) the composition is skewed to gly residues. Phosphoserine is present on serine 68. A PDZ domain is found at 133–213 (EVEVFKSEDA…GRTFTLKLTE (81 aa)). Residues 221–244 (ISQRSSGGHPGSGPQLGTGRGTLR) are disordered. 3 positions are modified to phosphoserine: serine 222, serine 225, and serine 232. The span at 228 to 240 (GHPGSGPQLGTGR) shows a compositional bias: gly residues. Position 242 is a phosphothreonine (threonine 242). Serine 247 bears the Phosphoserine mark.

The protein belongs to the GIPC family. Interacts with SDC4/syndecan-4 and SEMA4C/semaphorin-4C. Interacts with RGS19 (C-terminus), GLUT1 (C-terminus), ACTN1, KIF1B, MYO6 and PLEKHG5. Widely expressed.

The protein resides in the cytoplasm. It is found in the membrane. In terms of biological role, may be involved in G protein-linked signaling. The chain is PDZ domain-containing protein GIPC1 (Gipc1) from Rattus norvegicus (Rat).